Here is a 396-residue protein sequence, read N- to C-terminus: Putative nickel insertion protein (396 aa).

This sequence belongs to the LarC family.

This Methanosarcina acetivorans (strain ATCC 35395 / DSM 2834 / JCM 12185 / C2A) protein is Putative nickel insertion protein.